A 340-amino-acid polypeptide reads, in one-letter code: MTDIAEITGINKIGLLSLGAYRPERVVTNDEICERIESSDEWIYTRTGIKTRRFAADEETAQTLAIEAGRKAIANALLTGAEIDAVIVATSTHYLQTPASAPAVATALGAQGVPAFDLSAGCAGFGYAVGVAGDMIRGGSASKVLVIGSEKLSPALDMTDRGNCFIFGDGAGAVVVGETAEQGIGPTVWGSDGSQSNAIRQDIDWMDFAAAPDPEGPRPYLRIEGTSVFRWAAFEMGKVGQRAMEAAKVGPEQIDVFVPHQANTRINELLAKNLHLRADAVIANDIEHTGNTSAASVPLAMETLLSTGAAKPGDLALLIGYGAGLSYAAQVVRMPPVPFE.

Catalysis depends on residues cysteine 122 and histidine 260. The interval 261 to 265 (QANTR) is ACP-binding. Residue asparagine 291 is part of the active site.

Belongs to the thiolase-like superfamily. FabH family. As to quaternary structure, homodimer.

The protein resides in the cytoplasm. It catalyses the reaction malonyl-[ACP] + acetyl-CoA + H(+) = 3-oxobutanoyl-[ACP] + CO2 + CoA. The protein operates within lipid metabolism; fatty acid biosynthesis. Its function is as follows. Catalyzes the condensation reaction of fatty acid synthesis by the addition to an acyl acceptor of two carbons from malonyl-ACP. Catalyzes the first condensation reaction which initiates fatty acid synthesis and may therefore play a role in governing the total rate of fatty acid production. Possesses both acetoacetyl-ACP synthase and acetyl transacylase activities. Its substrate specificity determines the biosynthesis of branched-chain and/or straight-chain of fatty acids. The protein is Beta-ketoacyl-[acyl-carrier-protein] synthase III of Mycobacteroides abscessus (strain ATCC 19977 / DSM 44196 / CCUG 20993 / CIP 104536 / JCM 13569 / NCTC 13031 / TMC 1543 / L948) (Mycobacterium abscessus).